Reading from the N-terminus, the 481-residue chain is Sestrin-1 (481 aa).

Positions F63–G244 are N-terminal domain; may mediate the alkylhydroperoxide reductase activity. The active-site Cysteine sulfenic acid (-SOH) intermediate is C122. Residues K295 to R316 form a disordered region. Residues P310–T481 are C-terminal domain; mediates TORC1 regulation. Residues T375–T378, T387, and E452 each bind L-leucine.

This sequence belongs to the sestrin family.

The protein resides in the nucleus. Its subcellular location is the cytoplasm. The catalysed reaction is a hydroperoxide + L-cysteinyl-[protein] = S-hydroxy-L-cysteinyl-[protein] + an alcohol. Functionally, may function as an intracellular leucine sensor that negatively regulates the TORC1 signaling pathway through the GATOR complex. In absence of leucine, binds the GATOR subcomplex GATOR2 and prevents TORC1 signaling. Binding of leucine to SESN2 disrupts its interaction with GATOR2 thereby activating the TORC1 signaling pathway. This stress-inducible metabolic regulator may also play a role in protection against oxidative and genotoxic stresses. May prevent the accumulation of reactive oxygen species (ROS) through the alkylhydroperoxide reductase activity born by the N-terminal domain of the protein. This is Sestrin-1 from Xenopus laevis (African clawed frog).